The following is a 107-amino-acid chain: Large ribosomal subunit protein uL24 (107 aa).

This sequence belongs to the universal ribosomal protein uL24 family. As to quaternary structure, part of the 50S ribosomal subunit.

Functionally, one of two assembly initiator proteins, it binds directly to the 5'-end of the 23S rRNA, where it nucleates assembly of the 50S subunit. Its function is as follows. One of the proteins that surrounds the polypeptide exit tunnel on the outside of the subunit. This is Large ribosomal subunit protein uL24 from Pelotomaculum thermopropionicum (strain DSM 13744 / JCM 10971 / SI).